We begin with the raw amino-acid sequence, 681 residues long: MLMTAAADVTRRSPRRVFRDRREAGRVLAELLAAYRDQPDVIVLGLARGGLPVAWEVAAALHAPLDAFVVRKLGAPGHDEFAVGALASGGRVVVNDDVVRGLRITPQQLRDIAEREGRELLRRESAYRGERPPTDITGKTVIVVDDGLATGASMFAAVQALRDAQPAQIVIAVPAAPESTCREFAGLVDDVVCATMPTPFLAVGESFWDFRQVTDEEVRRLLATPTAGPSLRRPAASTAADVLRRVAIDAPGGVPTHEVLAELVGDARIVLIGESSHGTHEFYQARAAMTQWLIEEKGFGAVAAEADWPDAYRVNRYVRGLGEDTNADEALSGFERFPAWMWRNTVVRDFVEWLRTRNQRYESGALRQAGFYGLDLYSLHRSIQEVISYLDKVDPRAAARARARYACFDHACADDGQAYGFAAAFGAGPSCEREAVEQLVDVQRNALAYARQDGLLAEDELFYAQQNAQTVRDAEVYYRAMFSGRVTSWNLRDQHMAQTLGSLLTHLDRHLDAPPARIVVWAHNSHVGDARATEVWADGQLTLGQIVRERYGDESRSIGFSTYTGTVTAASEWGGIAQRKAVRPALHGSVEELFHQTADSFLVSARLSRDAEAPLDVVRLGRAIGVVYLPATERQSHYLHVRPADQFDAMIHIDQTRALEPLEVTSRWIAGENPETYPTGL.

The protein in the N-terminal section; belongs to the purine/pyrimidine phosphoribosyltransferase family.

This is an uncharacterized protein from Mycobacterium tuberculosis (strain CDC 1551 / Oshkosh).